Reading from the N-terminus, the 622-residue chain is DNA mismatch repair protein MutL (622 aa).

This sequence belongs to the DNA mismatch repair MutL/HexB family.

Its function is as follows. This protein is involved in the repair of mismatches in DNA. It is required for dam-dependent methyl-directed DNA mismatch repair. May act as a 'molecular matchmaker', a protein that promotes the formation of a stable complex between two or more DNA-binding proteins in an ATP-dependent manner without itself being part of a final effector complex. The chain is DNA mismatch repair protein MutL from Actinobacillus pleuropneumoniae serotype 3 (strain JL03).